Consider the following 209-residue polypeptide: Methylthioribulose-1-phosphate dehydratase (209 aa).

Zn(2+)-binding residues include His-99 and His-101.

The protein belongs to the aldolase class II family. MtnB subfamily. Zn(2+) is required as a cofactor.

It catalyses the reaction 5-(methylsulfanyl)-D-ribulose 1-phosphate = 5-methylsulfanyl-2,3-dioxopentyl phosphate + H2O. The protein operates within amino-acid biosynthesis; L-methionine biosynthesis via salvage pathway; L-methionine from S-methyl-5-thio-alpha-D-ribose 1-phosphate: step 2/6. Catalyzes the dehydration of methylthioribulose-1-phosphate (MTRu-1-P) into 2,3-diketo-5-methylthiopentyl-1-phosphate (DK-MTP-1-P). The protein is Methylthioribulose-1-phosphate dehydratase of Leptospira biflexa serovar Patoc (strain Patoc 1 / Ames).